A 436-amino-acid chain; its full sequence is GTPase Der (436 aa).

EngA-type G domains follow at residues 4–167 (PVVA…KNLP) and 176–351 (VQFC…ENHA). Residues 10-17 (GRPNVGKS), 57-61 (DTGGI), 119-122 (NKLD), 182-189 (GRPNVGKS), 229-233 (DTAGM), and 294-297 (NKWD) contribute to the GTP site. A KH-like domain is found at 352 to 436 (MRVQTNILND…PIKIFARARK (85 aa)).

Belongs to the TRAFAC class TrmE-Era-EngA-EngB-Septin-like GTPase superfamily. EngA (Der) GTPase family. Associates with the 50S ribosomal subunit.

In terms of biological role, GTPase that plays an essential role in the late steps of ribosome biogenesis. The protein is GTPase Der of Bacillus pumilus (strain SAFR-032).